Consider the following 295-residue polypeptide: Glycine N-acyltransferase (295 aa).

Lys15, Lys126, and Lys140 each carry N6-acetyllysine; alternate. N6-succinyllysine; alternate occurs at positions 15, 126, and 140. Lys158 is subject to N6-acetyllysine. Residue Lys168 is modified to N6-succinyllysine. Lys255 carries the post-translational modification N6-acetyllysine; alternate. The residue at position 255 (Lys255) is an N6-succinyllysine; alternate.

This sequence belongs to the glycine N-acyltransferase family. As to expression, detected in liver (at protein level).

It localises to the mitochondrion. It carries out the reaction an acyl-CoA + glycine = an N-acylglycine + CoA + H(+). It catalyses the reaction benzoyl-CoA + glycine = N-benzoylglycine + CoA + H(+). Mitochondrial acyltransferase which transfers an acyl group to the N-terminus of glycine and glutamine, although much less efficiently. Can conjugate a multitude of substrates to form a variety of N-acylglycines, thereby detoxify xenobiotics, such as benzoic acid or salicylic acid, and endogenous organic acids, such as isovaleric acid. This chain is Glycine N-acyltransferase (GLYAT), found in Bos taurus (Bovine).